A 189-amino-acid polypeptide reads, in one-letter code: MAIKSDRWIREMSEKHGMIEPYAENQVRFNAQGEKLISYGVSSYGYDVRCAPEFKVFTNVHSAIVDPKNFDEKSFIDIHSDVCIIPPNSFALARTVEYFRIPRNVLTVCLGKSTYARCGIIVNVTPLEPEWEGHVTLEFSNTTNLPARIYAGEGVAQMLFFESDEVCETSYKDRGGKYQGQTGVTLPKA.

DCTP-binding positions include Lys112 to Arg117, Thr136 to Glu138, Gln157, Tyr171, and Gln181. Glu138 serves as the catalytic Proton donor/acceptor.

The protein belongs to the dCTP deaminase family. As to quaternary structure, homotrimer.

It catalyses the reaction dCTP + H2O + H(+) = dUTP + NH4(+). The protein operates within pyrimidine metabolism; dUMP biosynthesis; dUMP from dCTP (dUTP route): step 1/2. Its function is as follows. Catalyzes the deamination of dCTP to dUTP. In Acinetobacter baylyi (strain ATCC 33305 / BD413 / ADP1), this protein is dCTP deaminase.